The chain runs to 443 residues: Glutamyl-tRNA reductase (443 aa).

Residues 49–52 (TCNR), Ser-109, 114–116 (ETQ), and Gln-120 contribute to the substrate site. The active-site Nucleophile is Cys-50. 189–194 (GAGDMS) contributes to the NADP(+) binding site.

Belongs to the glutamyl-tRNA reductase family. Homodimer.

The catalysed reaction is (S)-4-amino-5-oxopentanoate + tRNA(Glu) + NADP(+) = L-glutamyl-tRNA(Glu) + NADPH + H(+). It functions in the pathway porphyrin-containing compound metabolism; protoporphyrin-IX biosynthesis; 5-aminolevulinate from L-glutamyl-tRNA(Glu): step 1/2. Functionally, catalyzes the NADPH-dependent reduction of glutamyl-tRNA(Glu) to glutamate 1-semialdehyde (GSA). The protein is Glutamyl-tRNA reductase of Staphylococcus saprophyticus subsp. saprophyticus (strain ATCC 15305 / DSM 20229 / NCIMB 8711 / NCTC 7292 / S-41).